Consider the following 289-residue polypeptide: MQVFPPPQVPLLGAHTSTSGGLQNAIYEGQEIGASTVQMFTANQRQWRRRPLTDDLINSFKTALEETSLSYIMSHAGYLINPGAPNPEILEKSRICIQQEIQDCLSLGITFVNFHPGAAVNDTKEACLDRIVSSFSLVEPLFEDSPPLVVLFETTAGQGTLVGSTFEELGYLIDKLKHKIPVGVCIDTCHIFASGYDITSPGSWKQVLKNFDDAIGLSYLRAFHLNDSMFPLGKHKDRHAPLGEGDIGMESFKFLMTDELTRMIPKYLETPGGPDLWTKEIRQLKSFQK.

Zn(2+) contacts are provided by H75, H115, E153, D187, H190, H224, D237, H239, and E269.

This sequence belongs to the AP endonuclease 2 family. The cofactor is Zn(2+).

It carries out the reaction Endonucleolytic cleavage to 5'-phosphooligonucleotide end-products.. Functionally, endonuclease IV plays a role in DNA repair. It cleaves phosphodiester bonds at apurinic or apyrimidinic (AP) sites, generating a 3'-hydroxyl group and a 5'-terminal sugar phosphate. The protein is Probable endonuclease 4 of Chlamydia abortus (strain DSM 27085 / S26/3) (Chlamydophila abortus).